The chain runs to 380 residues: Cytochrome b (380 aa).

The next 4 membrane-spanning stretches (helical) occupy residues phenylalanine 34–methionine 54, tryptophan 78–isoleucine 99, tryptophan 114–leucine 134, and phenylalanine 179–threonine 199. The heme b site is built by histidine 84 and histidine 98. Residues histidine 183 and histidine 197 each contribute to the heme b site. Histidine 202 is an a ubiquinone binding site. 4 helical membrane-spanning segments follow: residues leucine 227 to serine 247, leucine 289 to histidine 309, leucine 321 to serine 341, and phenylalanine 348 to proline 368.

This sequence belongs to the cytochrome b family. As to quaternary structure, the cytochrome bc1 complex contains 11 subunits: 3 respiratory subunits (MT-CYB, CYC1 and UQCRFS1), 2 core proteins (UQCRC1 and UQCRC2) and 6 low-molecular weight proteins (UQCRH/QCR6, UQCRB/QCR7, UQCRQ/QCR8, UQCR10/QCR9, UQCR11/QCR10 and a cleavage product of UQCRFS1). This cytochrome bc1 complex then forms a dimer. It depends on heme b as a cofactor.

The protein resides in the mitochondrion inner membrane. Functionally, component of the ubiquinol-cytochrome c reductase complex (complex III or cytochrome b-c1 complex) that is part of the mitochondrial respiratory chain. The b-c1 complex mediates electron transfer from ubiquinol to cytochrome c. Contributes to the generation of a proton gradient across the mitochondrial membrane that is then used for ATP synthesis. The protein is Cytochrome b (MT-CYB) of Hydrobates pelagicus (European storm-petrel).